The primary structure comprises 345 residues: Heat-inducible transcription repressor HrcA (345 aa).

It belongs to the HrcA family.

Negative regulator of class I heat shock genes (grpE-dnaK-dnaJ and groELS operons). Prevents heat-shock induction of these operons. This chain is Heat-inducible transcription repressor HrcA, found in Lachnoclostridium phytofermentans (strain ATCC 700394 / DSM 18823 / ISDg) (Clostridium phytofermentans).